The following is a 53-amino-acid chain: Ribulose bisphosphate carboxylase large chain (53 aa).

Residues 1 to 2 constitute a propeptide that is removed on maturation; that stretch reads MS. N-acetylproline is present on Pro-3. At Lys-14 the chain carries N6,N6,N6-trimethyllysine.

Belongs to the RuBisCO large chain family. Type I subfamily. Heterohexadecamer of 8 large chains and 8 small chains.

Its subcellular location is the plastid. It localises to the chloroplast. It catalyses the reaction 2 (2R)-3-phosphoglycerate + 2 H(+) = D-ribulose 1,5-bisphosphate + CO2 + H2O. The enzyme catalyses D-ribulose 1,5-bisphosphate + O2 = 2-phosphoglycolate + (2R)-3-phosphoglycerate + 2 H(+). Functionally, ruBisCO catalyzes two reactions: the carboxylation of D-ribulose 1,5-bisphosphate, the primary event in carbon dioxide fixation, as well as the oxidative fragmentation of the pentose substrate in the photorespiration process. Both reactions occur simultaneously and in competition at the same active site. This chain is Ribulose bisphosphate carboxylase large chain (rbcL), found in Malus domestica (Apple).